A 357-amino-acid polypeptide reads, in one-letter code: Probable glutamine amidotransferase DUG3 (357 aa).

The active-site For GATase activity is C2. The 259-residue stretch at 2–260 folds into the Glutamine amidotransferase type-2 domain; that stretch reads CRFLIFKGKQ…PGEYRVERLD (259 aa).

Belongs to the DUG3 family. In terms of assembly, component of the GSH degradosomal complex composed of at least DUG1, DUG2 and DUG3.

It localises to the cytoplasm. Component of the GSH degradosomal complex involved in the degradation of glutathione (GSH) and other peptides containing a gamma-glu-X bond. In Saccharomyces cerevisiae (strain ATCC 204508 / S288c) (Baker's yeast), this protein is Probable glutamine amidotransferase DUG3 (DUG3).